Here is a 241-residue protein sequence, read N- to C-terminus: L-aspartate dehydrogenase (241 aa).

NAD(+) contacts are provided by residues 10–11, Asp-28, 56–57, 63–64, 78–79, Ala-109, and Asn-164; these read NI, AS, EY, and IS. His-193 is an active-site residue.

The protein belongs to the L-aspartate dehydrogenase family. Homodimer.

It catalyses the reaction L-aspartate + NADP(+) + H2O = oxaloacetate + NH4(+) + NADPH + H(+). It carries out the reaction L-aspartate + NAD(+) + H2O = oxaloacetate + NH4(+) + NADH + H(+). It participates in cofactor biosynthesis; NAD(+) biosynthesis; iminoaspartate from L-aspartate (dehydrogenase route): step 1/1. With respect to regulation, competitively inhibited by L-malate and NH(4)(+). In terms of biological role, specifically catalyzes the NAD or NADP-dependent dehydrogenation of L-aspartate to iminoaspartate. Does not show aspartate oxidase activity. Is also able to catalyze the reverse reaction, i.e. the reductive amination of oxaloacetate. This is L-aspartate dehydrogenase from Thermotoga maritima (strain ATCC 43589 / DSM 3109 / JCM 10099 / NBRC 100826 / MSB8).